A 278-amino-acid polypeptide reads, in one-letter code: Putative phosphoenolpyruvate synthase regulatory protein (278 aa).

158 to 165 is a binding site for ADP; the sequence is GVSRSGKT.

The protein belongs to the pyruvate, phosphate/water dikinase regulatory protein family. PSRP subfamily.

The enzyme catalyses [pyruvate, water dikinase] + ADP = [pyruvate, water dikinase]-phosphate + AMP + H(+). It carries out the reaction [pyruvate, water dikinase]-phosphate + phosphate + H(+) = [pyruvate, water dikinase] + diphosphate. In terms of biological role, bifunctional serine/threonine kinase and phosphorylase involved in the regulation of the phosphoenolpyruvate synthase (PEPS) by catalyzing its phosphorylation/dephosphorylation. The chain is Putative phosphoenolpyruvate synthase regulatory protein from Acinetobacter baylyi (strain ATCC 33305 / BD413 / ADP1).